We begin with the raw amino-acid sequence, 508 residues long: Protein adenylyltransferase fic-1 (508 aa).

The chain crosses the membrane as a helical span at residues threonine 44–valine 64. TPR repeat units lie at residues alanine 147–asparagine 180 and proline 181–asparagine 214. The Inhibitory (S/T)XXXE(G/N) motif motif lies at threonine 270–glycine 275. Glutamate 274 provides a ligand contact to ATP. The region spanning isoleucine 326–lysine 461 is the Fido domain. An O-AMP-threonine; by autocatalysis modification is found at threonine 352. Valine 357–phenylalanine 360 lines the ATP pocket. Histidine 404 is an active-site residue. ATP contacts are provided by residues aspartate 408–arginine 415, tyrosine 440–tyrosine 441, and asparagine 448. An O-AMP-threonine; by autocatalysis modification is found at threonine 476. The segment at leucine 482–asparagine 508 is disordered. Basic and acidic residues predominate over residues valine 496–asparagine 508.

The protein belongs to the fic family. Forms homodimers; homodimerization might be required for adenylyltransferase activity. As to expression, ubiquitously expressed, with high expression in the germline.

It localises to the endoplasmic reticulum membrane. The protein localises to the nucleus membrane. The catalysed reaction is L-tyrosyl-[protein] + ATP = O-(5'-adenylyl)-L-tyrosyl-[protein] + diphosphate. It carries out the reaction L-threonyl-[protein] + ATP = 3-O-(5'-adenylyl)-L-threonyl-[protein] + diphosphate. The enzyme catalyses 3-O-(5'-adenylyl)-L-threonyl-[protein] + H2O = L-threonyl-[protein] + AMP + H(+). The side chain of Glu-274 determines which of the two opposing activities (AMPylase or de-AMPylase) will take place. In response to endoplasmic reticulum stress, mediates de-AMPylase activity. Adenylyltransferase activity is inhibited by the inhibitory helix present at the N-terminus: Glu-274 binds ATP and competes with ATP-binding at Arg-415, thereby preventing adenylyltransferase activity. In unstressed cells, disengagement of Glu-274 promotes adenylyltransferase activity. Activation dissociates ATP-binding from Glu-274, allowing ordered binding of the entire ATP moiety with the alpha-phosphate in an orientation that is productive for accepting an incoming target hydroxyl side chain. Its function is as follows. Protein that can both mediate the addition of adenosine 5'-monophosphate (AMP) to specific residues of target proteins (AMPylation), and the removal of the same modification from target proteins (de-AMPylation), depending on the context. The side chain of Glu-274 determines which of the two opposing activities (AMPylase or de-AMPylase) will take place. Adenylyltransferase that mediates the addition of adenosine 5'-monophosphate (AMP) to specific residues of target proteins. In vivo target proteins include the heat-shock 70 family proteins hsp-1 and hsp-3 and the translation elongation factors eef-1A, eef-1G and eef-2. Can AMPylate core histone H3 in vitro. Can also act as a phosphodiesterase by mediating removal of ATP (de-AMPylation) from target proteins. Decreases susceptibility to P.aeruginosa-mediated killing and might therefore play a role in the innate immune response. This is Protein adenylyltransferase fic-1 from Caenorhabditis elegans.